The primary structure comprises 330 residues: Ribosome production factor 1 (330 aa).

Disordered regions lie at residues 1–32 and 53–83; these read MKAV…FPPT and EEKR…KEVP. Basic residues predominate over residues 55–70; the sequence is KRKKRMELKKKKKKER. The segment covering 71-83 has biased composition (basic and acidic residues); it reads KALDDKAPPKEVP. One can recognise a Brix domain in the interval 123–306; the sequence is PKVLITTSDR…LRSLQKGTFD (184 aa). Residues 284–301 are RNA-binding; sequence VGIQELGPRFTLKLRSLQ.

Its subcellular location is the nucleus. It localises to the nucleolus. In terms of biological role, may be required for ribosome biogenesis. The protein is Ribosome production factor 1 (rpf1) of Danio rerio (Zebrafish).